A 207-amino-acid polypeptide reads, in one-letter code: Small ribosomal subunit protein uS4 (207 aa).

Positions 31 to 40 (KCRLDNKPGQ) are enriched in basic and acidic residues. Residues 31 to 56 (KCRLDNKPGQDGRTSGSRTSDYGNQL) form a disordered region. Polar residues predominate over residues 42–53 (GRTSGSRTSDYG). The 62-residue stretch at 97 to 158 (SRLDNVVYRM…KAKKQARITE (62 aa)) folds into the S4 RNA-binding domain.

It belongs to the universal ribosomal protein uS4 family. In terms of assembly, part of the 30S ribosomal subunit. Contacts protein S5. The interaction surface between S4 and S5 is involved in control of translational fidelity.

One of the primary rRNA binding proteins, it binds directly to 16S rRNA where it nucleates assembly of the body of the 30S subunit. In terms of biological role, with S5 and S12 plays an important role in translational accuracy. This chain is Small ribosomal subunit protein uS4, found in Polynucleobacter necessarius subsp. necessarius (strain STIR1).